The primary structure comprises 159 residues: MAVQLVLNFIIAVFWLFVTNSYTTNNFVLGFIFGLVLVYLLHRVLPGRFYVITLYRIIKLIIIFLIELIKANFDVLKIIIKPSIKNEPGFFVYHTDLKKDWQIVLLSNLITLTPGTVVLGVSDDRTKIYIHAIDFSTKEQEVESIKTSLEKIVREVGEI.

4 consecutive transmembrane segments (helical) span residues 1-21, 27-47, 49-69, and 101-121; these read MAVQ…VTNS, FVLG…VLPG, FYVI…IELI, and WQIV…VLGV.

This sequence belongs to the CPA3 antiporters (TC 2.A.63) subunit E family. In terms of assembly, may form a heterooligomeric complex that consists of seven subunits: mnhA1, mnhB1, mnhC1, mnhD1, mnhE1, mnhF1 and mnhG1.

The protein localises to the cell membrane. Its function is as follows. Mnh complex is a Na(+)/H(+) antiporter involved in Na(+) excretion. The sequence is that of Na(+)/H(+) antiporter subunit E1 (mnhE1) from Staphylococcus aureus (strain bovine RF122 / ET3-1).